Here is a 510-residue protein sequence, read N- to C-terminus: MDYVTQSPWIVTLIVAATTYCTLRWVQYWRSWVNVPVVGRRGFLGSWISTILWTWEARGCIQKGYEKNKDFAFQVSTPNGWEVCICNDDMIKEYKNLMDDQMSALAVTSETFQAKYTLPGADWDAVHKLVPQPALAKSLMWLRNRAANDTDPYFADFVKTFQRAFKEEIQVEQDGAPFPCFPRYSRIVAALTVKALLGSLENRPELIDLLCEYAEAIPLDGFFIALFPAVLKPIVAFFCKAPRLSDRLVKVITEEIARRELENKHRIPEDMTDWMAQWVKDNPGYCIESAVVRVIATFFGGIHTTTQLTVHTLLEIATRPEYVDPLRQEITTALKTHGGWNKSAIESMTKLDSFIKEAQRFNPLDAASLARQATRDFQFSNGLKLPRGTWVFAPNGPMLFDESLYPAGSQFDGLRFWKLAEQTQKPHDYRLVTASSKYLQFGDGRHTCPGRFMAADEIRLIVAHTLFHFDIAIKNHGPRPRNTTFKKICFPDMAAEIMLRPRKPHGSDGN.

The helical transmembrane segment at 9–26 (WIVTLIVAATTYCTLRWV) threads the bilayer. 2 N-linked (GlcNAc...) asparagine glycosylation sites follow: N148 and N341. C448 is a heme binding site. The N-linked (GlcNAc...) asparagine glycan is linked to N482.

This sequence belongs to the cytochrome P450 family. It depends on heme as a cofactor.

Its subcellular location is the membrane. The protein operates within secondary metabolite biosynthesis. Cytochrome P450 monooxygenase; part of the gene cluster that mediates the biosynthesis of the indole diterpenes penitrems. The geranylgeranyl diphosphate (GGPP) synthase penG catalyzes the first step in penitrem biosynthesis via conversion of farnesyl pyrophosphate and isopentyl pyrophosphate into geranylgeranyl pyrophosphate (GGPP). Condensation of indole-3-glycerol phosphate with GGPP by the prenyl transferase penC then forms 3-geranylgeranylindole (3-GGI). Epoxidation by the FAD-dependent monooxygenase penM leads to a epoxidized-GGI that is substrate of the terpene cyclase penB for cyclization to yield paspaline. Paspaline is subsequently converted to 13-desoxypaxilline by the cytochrome P450 monooxygenase penP, the latter being then converted to paxilline by the cytochrome P450 monooxygenase penQ. Paxilline is converted to beta-paxitriol via C-10 ketoreduction by the short-chain dehydrogenase PC-15 which can be monoprenylated at the C-20 by the indole diterpene prenyltransferase penD. A two-step elimination (acetylation and elimination) process performed by the O-acetyltransferase PC-16 and the P.simplicissimum ptmI-ortholog not yet identified in P.crustosum, leads to the production of the prenylated form of penijanthine. The FAD-linked oxidoreductase ptmO then converts the prenylated form of penijanthine into PC-M5 which is in turn transformed into PC-M4 by the aromatic dimethylallyltransferase PC-22. A series of oxidation steps involving 4 cytochrome P450 monooxygenases (PC-21, PC-05, PC-23, PC-20) and a FAD-dependent monooxygenase (PC-14) are required for the transformation of PC-M4 to penitrems A and E. Synthesis of these final products is proposed to proceed via penitrems D and C (PC-21, PC-05, PC-14) and penitrems B and F (PC-21, PC-05, PC-14, PC-23). This Penicillium crustosum (Blue mold fungus) protein is Cytochrome P450 monooxygenase penQ.